Reading from the N-terminus, the 376-residue chain is Putative F-box/FBD/LRR-repeat protein At5g52460 (376 aa).

The F-box domain maps to 16-75 (RDEISSLPDDLLIQILLLVPIKDAVGTMILSKRWRYVWTLLPKLEYSDPGDECESVWKFL). 2 LRR repeats span residues 131–154 (CKTL…VCLP) and 199–224 (FAKV…KFLK). Residues 296–348 (CHGTNQGTVPRCLSAHLDEEFVWHGYRGNEEETQLIRYIFANAKCLKKREIST) form the FBD domain.

The protein is Putative F-box/FBD/LRR-repeat protein At5g52460 (EDA41) of Arabidopsis thaliana (Mouse-ear cress).